The chain runs to 244 residues: Phosphoadenosine 5'-phosphosulfate reductase (244 aa).

Residue Cys239 is the Nucleophile; cysteine thiosulfonate intermediate of the active site.

It belongs to the PAPS reductase family. CysH subfamily.

The protein localises to the cytoplasm. The enzyme catalyses [thioredoxin]-disulfide + sulfite + adenosine 3',5'-bisphosphate + 2 H(+) = [thioredoxin]-dithiol + 3'-phosphoadenylyl sulfate. It participates in sulfur metabolism; hydrogen sulfide biosynthesis; sulfite from sulfate: step 3/3. Its function is as follows. Catalyzes the formation of sulfite from phosphoadenosine 5'-phosphosulfate (PAPS) using thioredoxin as an electron donor. This chain is Phosphoadenosine 5'-phosphosulfate reductase, found in Sodalis glossinidius (strain morsitans).